The following is a 527-amino-acid chain: Putative BTB/POZ domain and WD-repeat protein R783 (527 aa).

The BTB domain occupies 45–115; that stretch reads TDVTIVLDDG…FYSQNTDTRN (71 aa). 5 WD repeats span residues 215 to 266, 272 to 310, 313 to 353, 355 to 391, and 436 to 476; these read IHGD…VEAS, NVKTRFEHFCYLPSNNHLISTSSYNIYVWDLSTNKLIKT, KHKN…IVRC, ISPVDCICYSSSGRELVIVNKHYIKVFNVSDGTFLFK, and YCPS…DNKY.

The protein belongs to the mimivirus BTB/WD family.

The polypeptide is Putative BTB/POZ domain and WD-repeat protein R783 (Acanthamoeba polyphaga (Amoeba)).